A 675-amino-acid polypeptide reads, in one-letter code: Heat shock 70 kDa protein, mitochondrial (675 aa).

Residues 1 to 52 (MAATLLRSLQRRNLSSSSVSAFRSLTGSTKTSYATHKLASLTRPFSSRPAGN) constitute a mitochondrion transit peptide. The disordered stretch occupies residues 639–675 (VSKIGQHMSGGSSGGPSEGGSQGGEQAPEAEYEEVKK). A compositionally biased stretch (gly residues) spans 649–661 (GSSGGPSEGGSQG). A compositionally biased stretch (acidic residues) spans 666 to 675 (PEAEYEEVKK).

Belongs to the heat shock protein 70 family.

Its subcellular location is the mitochondrion. The chain is Heat shock 70 kDa protein, mitochondrial (HSP1) from Pisum sativum (Garden pea).